The following is a 275-amino-acid chain: Mitochondrial prohibitin complex protein 1 (275 aa).

Residues 180 to 213 (REFTEAVEMKQVAQQEAEKARYLVEKAEQMKIAA) are a coiled coil.

Belongs to the prohibitin family. As to quaternary structure, high molecular weight complex that consist of phb-1 and phb-2.

The protein localises to the mitochondrion inner membrane. Its function is as follows. PHB proteins are essential during embryonic development and are required for somatic and germline differentiation in the larval gonad. A deficiency in PHB proteins results in altered mitochondrial biogenesis in body wall muscle cells. The chain is Mitochondrial prohibitin complex protein 1 (phb-1) from Caenorhabditis elegans.